A 293-amino-acid chain; its full sequence is Pyridoxal 5'-phosphate synthase subunit PdxS (293 aa).

Residue Asp23 participates in D-ribose 5-phosphate binding. The active-site Schiff-base intermediate with D-ribose 5-phosphate is Lys80. Gly152 contacts D-ribose 5-phosphate. Position 164 (Arg164) interacts with D-glyceraldehyde 3-phosphate. D-ribose 5-phosphate contacts are provided by residues Gly213 and 234-235 (GS).

It belongs to the PdxS/SNZ family. As to quaternary structure, in the presence of PdxT, forms a dodecamer of heterodimers.

The enzyme catalyses aldehydo-D-ribose 5-phosphate + D-glyceraldehyde 3-phosphate + L-glutamine = pyridoxal 5'-phosphate + L-glutamate + phosphate + 3 H2O + H(+). It functions in the pathway cofactor biosynthesis; pyridoxal 5'-phosphate biosynthesis. In terms of biological role, catalyzes the formation of pyridoxal 5'-phosphate from ribose 5-phosphate (RBP), glyceraldehyde 3-phosphate (G3P) and ammonia. The ammonia is provided by the PdxT subunit. Can also use ribulose 5-phosphate and dihydroxyacetone phosphate as substrates, resulting from enzyme-catalyzed isomerization of RBP and G3P, respectively. In Chloroflexus aurantiacus (strain ATCC 29366 / DSM 635 / J-10-fl), this protein is Pyridoxal 5'-phosphate synthase subunit PdxS.